Reading from the N-terminus, the 138-residue chain is Holo-[acyl-carrier-protein] synthase (138 aa).

Asp11 and Glu65 together coordinate Mg(2+).

It belongs to the P-Pant transferase superfamily. AcpS family. The cofactor is Mg(2+).

It localises to the cytoplasm. It catalyses the reaction apo-[ACP] + CoA = holo-[ACP] + adenosine 3',5'-bisphosphate + H(+). Transfers the 4'-phosphopantetheine moiety from coenzyme A to a Ser of acyl-carrier-protein. This is Holo-[acyl-carrier-protein] synthase from Ralstonia nicotianae (strain ATCC BAA-1114 / GMI1000) (Ralstonia solanacearum).